The sequence spans 1458 residues: Phospholipase B1, membrane-associated (1458 aa).

An N-terminal signal peptide occupies residues 1-21 (MGLRPGIFLLELLLLLGQGTP). Residues 22-1417 (QIHTSPRKST…QAEEAPEVLY (1396 aa)) lie on the Extracellular side of the membrane. Tandem repeats lie at residues 39 to 347 (ETLK…YRNS), 362 to 707 (VREG…YKNS), and 708 to 1054 (MQGH…PRNS). Residues 39–1402 (ETLKNSPFPC…SPYLYTLRNS (1364 aa)) are 4 X 308-326 AA approximate repeats. Residues Asn-173 and Asn-240 are each glycosylated (N-linked (GlcNAc...) asparagine). The active site involves Ser-400. Asn-493 carries N-linked (GlcNAc...) asparagine glycosylation. The active site involves Asp-514. 2 N-linked (GlcNAc...) asparagine glycosylation sites follow: Asn-529 and Asn-590. Residue His-655 is part of the active site. Residues Asn-690, Asn-783, Asn-797, Asn-809, Asn-1055, Asn-1113, Asn-1275, and Asn-1378 are each glycosylated (N-linked (GlcNAc...) asparagine). Copy 4 of the repeat occupies 1064–1402 (IENWGSDFLC…SPYLYTLRNS (339 aa)). The tract at residues 1403-1445 (RLLPDQAEEAPEVLYWAVPVAAGVGLVVGIIGTVVWRCRRGGR) is necessary for membrane localization. A helical transmembrane segment spans residues 1418–1438 (WAVPVAAGVGLVVGIIGTVVW). Residues 1439–1458 (RCRRGGRREDPPMSLRTVAL) are Cytoplasmic-facing.

The protein belongs to the 'GDSL' lipolytic enzyme family. Phospholipase B1 subfamily. Undergoes proteolytic cleavage in the ileum. Expressed in the epidermis (at protein level).

Its subcellular location is the apical cell membrane. The enzyme catalyses a 1,2-diacyl-sn-glycero-3-phosphocholine + H2O = a 1-acyl-sn-glycero-3-phosphocholine + a fatty acid + H(+). It carries out the reaction a 1-O-alkyl-2-acyl-sn-glycero-3-phosphocholine + H2O = a 1-O-alkyl-sn-glycero-3-phosphocholine + a fatty acid + H(+). The catalysed reaction is a 1-acyl-sn-glycero-3-phosphocholine + H2O = sn-glycerol 3-phosphocholine + a fatty acid + H(+). It catalyses the reaction a triacylglycerol + H2O = a diacylglycerol + a fatty acid + H(+). The enzyme catalyses 1,2-dihexadecanoyl-sn-glycero-3-phosphocholine + H2O = 1-hexadecanoyl-sn-glycero-3-phosphocholine + hexadecanoate + H(+). It carries out the reaction 1-hexadecanoyl-2-(9Z-octadecenoyl)-sn-glycero-3-phosphocholine + H2O = 1-hexadecanoyl-sn-glycero-3-phosphocholine + (9Z)-octadecenoate + H(+). The catalysed reaction is 1,2-di-(9Z-octadecenoyl)-sn-glycero-3-phosphocholine + H2O = 1-(9Z-octadecenoyl)-sn-glycero-3-phosphocholine + (9Z)-octadecenoate + H(+). It catalyses the reaction 1-hexadecanoyl-2-(9Z,12Z-octadecadienoyl)-sn-glycero-3-phosphocholine + H2O = (9Z,12Z)-octadecadienoate + 1-hexadecanoyl-sn-glycero-3-phosphocholine + H(+). The enzyme catalyses 1-hexadecanoyl-2-(9Z,12Z-octadecadienoyl)-sn-glycero-3-phosphocholine + H2O = 2-(9Z,12Z-octadecadienoyl)-sn-glycero-3-phosphocholine + hexadecanoate + H(+). It carries out the reaction 1-hexadecanoyl-2-(9Z-octadecenoyl)-sn-glycero-3-phosphoethanolamine + H2O = 1-hexadecanoyl-sn-glycero-3-phosphoethanolamine + (9Z)-octadecenoate + H(+). The catalysed reaction is 1-hexadecanoyl-2-(9Z-octadecenoyl)-sn-glycero-3-phospho-(1'-sn-glycerol) + H2O = 1-hexadecanoyl-sn-glycero-3-phospho-(1'-sn-glycerol) + (9Z)-octadecenoate + H(+). It catalyses the reaction 1,2-dihexadecanoyl-sn-glycero-3-phosphocholine + 2 H2O = sn-glycerol 3-phosphocholine + 2 hexadecanoate + 2 H(+). The enzyme catalyses 1-O-hexadecyl-2-(9Z)-octadecenoyl-sn-glycero-3-phosphocholine + H2O = 1-O-hexadecyl-sn-glycero-3-phosphocholine + (9Z)-octadecenoate + H(+). It carries out the reaction 1-hexadecanoyl-sn-glycero-3-phosphocholine + H2O = sn-glycerol 3-phosphocholine + hexadecanoate + H(+). The catalysed reaction is 1,2,3-tri-(9Z-octadecenoyl)-glycerol + H2O = di-(9Z)-octadecenoylglycerol + (9Z)-octadecenoate + H(+). It catalyses the reaction 1-hexadecanoyl-2-(9Z)-octadecenoyl-3-octadecanoyl-sn-glycerol + H2O = 1-hexadecanoyl-2-(9Z-octadecenoyl)-sn-glycerol + octadecanoate + H(+). The enzyme catalyses 1,3-dihexadecanoyl-2-(9Z-octadecenoyl)glycerol + H2O = 1,3-dihexadecanoylglycerol + (9Z)-octadecenoate + H(+). It carries out the reaction 1,3-dihexadecanoyl-2-(9Z-octadecenoyl)glycerol + H2O = 1-hexadecanoyl-2-(9Z-octadecenoyl)-glycerol + hexadecanoate + H(+). The catalysed reaction is 1-hexadecanoyl-2-(9Z)-octadecenoyl-3-octadecanoyl-sn-glycerol + H2O = 1-hexadecanoyl-3-octadecanoyl-sn-glycerol + (9Z)-octadecenoate + H(+). It catalyses the reaction 1-hexadecanoyl-2-(9Z)-octadecenoyl-3-octadecanoyl-sn-glycerol + H2O = 2-(9Z-octadecenoyl)-3-octadecanoyl-sn-glycerol + hexadecanoate + H(+). The enzyme catalyses 1-octadecanoyl-2-(9Z,12Z)-octadecadienoyl-sn-glycerol + H2O = 1-octadecanoyl-sn-glycerol + (9Z,12Z)-octadecadienoate + H(+). It carries out the reaction 1,2-di-(9Z-octadecenoyl)-sn-glycerol + H2O = 1-(9Z-octadecenoyl)-sn-glycerol + (9Z)-octadecenoate + H(+). The catalysed reaction is 2,3-di-(9Z)-octadecenoyl-sn-glycerol + H2O = 3-(9Z-octadecenoyl)-sn-glycerol + (9Z)-octadecenoate + H(+). It catalyses the reaction 1,3-di-(9Z-octadecenoyl)-glycerol + H2O = 1-(9Z-octadecenoyl)-glycerol + (9Z)-octadecenoate + H(+). The enzyme catalyses 1-(9Z-octadecenoyl)-glycerol + H2O = glycerol + (9Z)-octadecenoate + H(+). It carries out the reaction 2-(9Z-octadecenoyl)-glycerol + H2O = glycerol + (9Z)-octadecenoate + H(+). Its function is as follows. Calcium-independent membrane-associated phospholipase that catalyzes complete diacylation of phospholipids by hydrolyzing both sn-1 and sn-2 fatty acyl chains attached to the glycerol backbone (phospholipase B activity). Has dual phospholipase and lysophospholipase activities toward diacylphospholipids. Preferentially cleaves sn-2 ester bonds over sn-1 bonds. Acts as a lipase toward glycerolipid substrates. Hydrolyzes fatty acyl chains of diacylglycerols with preference for the sn-2 position and of triacylglycerols with not positional selectivity. May also hydrolyze long chain retinyl esters such as retinyl palmitate. May contribute to digestion of dietary phospholipids, glycerolipids and retinoids, facilitating lipid absorption at the brush border. The protein is Phospholipase B1, membrane-associated (PLB1) of Homo sapiens (Human).